A 572-amino-acid polypeptide reads, in one-letter code: Proline--tRNA ligase (572 aa).

Belongs to the class-II aminoacyl-tRNA synthetase family. ProS type 1 subfamily. In terms of assembly, homodimer.

It localises to the cytoplasm. It carries out the reaction tRNA(Pro) + L-proline + ATP = L-prolyl-tRNA(Pro) + AMP + diphosphate. Catalyzes the attachment of proline to tRNA(Pro) in a two-step reaction: proline is first activated by ATP to form Pro-AMP and then transferred to the acceptor end of tRNA(Pro). As ProRS can inadvertently accommodate and process non-cognate amino acids such as alanine and cysteine, to avoid such errors it has two additional distinct editing activities against alanine. One activity is designated as 'pretransfer' editing and involves the tRNA(Pro)-independent hydrolysis of activated Ala-AMP. The other activity is designated 'posttransfer' editing and involves deacylation of mischarged Ala-tRNA(Pro). The misacylated Cys-tRNA(Pro) is not edited by ProRS. The protein is Proline--tRNA ligase of Escherichia coli O7:K1 (strain IAI39 / ExPEC).